Consider the following 194-residue polypeptide: WASH complex subunit 3 (194 aa).

The residue at position 1 (Met1) is an N-acetylmethionine. Residues 46-74 (AVCEEKLADLSLRIQQIETTLNILDAKLS) adopt a coiled-coil conformation. Disordered stretches follow at residues 94 to 126 (VTNGSHSETTSEQTQQNSTQDSGAQESEAPSEN) and 158 to 194 (SEGLDPELLEKPDAPVPNGESERAVEESSDSDSSFSD). The span at 98 to 113 (SHSETTSEQTQQNSTQ) shows a compositional bias: low complexity. Over residues 114-126 (DSGAQESEAPSEN) the composition is skewed to polar residues.

It belongs to the CCDC53 family. In terms of assembly, component of the WASH core complex also described as WASH regulatory complex (SHRC) composed of WASHC1, WASHC2, WASHC3, WASHC4 and WASHC5. The WASH core complex associates via WASHC2 with the F-actin-capping protein dimer (formed by CAPZA1, CAPZA2 or CAPZA3 and CAPZB) in a transient or substoichiometric manner which was initially described as WASH complex.

It localises to the early endosome. In terms of biological role, acts as a component of the WASH core complex that functions as a nucleation-promoting factor (NPF) at the surface of endosomes, where it recruits and activates the Arp2/3 complex to induce actin polymerization, playing a key role in the fission of tubules that serve as transport intermediates during endosome sortingg. This Mus musculus (Mouse) protein is WASH complex subunit 3.